Consider the following 600-residue polypeptide: Na(+)/dicarboxylate cotransporter 3 (600 aa).

The Cytoplasmic segment spans residues 1 to 16 (MAALAALAKKVWSARR). A helical membrane pass occupies residues 17-37 (LLVLLLVPLALLPILFALPPK). At 38–55 (EGRCLYVILLMAVYWCTE) the chain is on the extracellular side. The helical transmembrane segment at 56-76 (ALPLSVTALLPIILFPFMGIL) threads the bilayer. The Cytoplasmic portion of the chain corresponds to 77-82 (PSSKVC). Residues 83-103 (PQYFLDTNFLFLSGLIMASAI) form a helical membrane-spanning segment. The Extracellular segment spans residues 104-137 (EERNLHRRIALKVLMLVGVQPARLILGMMVTTSF). The helical transmembrane segment at 138 to 158 (LSMWLSNTASTAMMLPIASAI) threads the bilayer. The Cytoplasmic portion of the chain corresponds to 159–229 (LKSLFGQRDT…KEEEHRRNIW (71 aa)). Residues 230 to 250 (KGFLISIPYSASIGGTATLTG) traverse the membrane as a helical segment. Over 251 to 278 (TAPNLILLGQLKSFFPQCDVVNFGSWFI) the chain is Extracellular. A helical transmembrane segment spans residues 279-299 (FAFPLMLLFLLVGWLWISFLY). The Cytoplasmic segment spans residues 300–336 (GGMSWRGWRKKNSKLQDVAEDKAKAVIQEEFQNLGPI). Residues 337-357 (KFAEQAVFILFCLFAILLFSR) traverse the membrane as a helical segment. Residues 358-372 (DPKFIPGWASLFAPG) are Extracellular-facing. A helical membrane pass occupies residues 373-393 (FVSDAVTGVAIVTILFFFPSQ). Residues 394 to 422 (KPSLKWWFDFKAPNSETEPLLSWKKAQET) are Cytoplasmic-facing. The helical intramembrane region spans 423–443 (VPWNIILLLGGGFAMAKGCEE). At 444–461 (SGLSAWIGGQLHPLEHVP) the chain is on the cytoplasmic side. The chain crosses the membrane as a helical span at residues 462 to 482 (PLLAVLLITVVIAFFTEFASN). The Extracellular segment spans residues 483-505 (TATIIIFLPVLAELAIRLHVHPL). Residues 506-526 (YLMIPGTVSCSYAFMLPVSTP) traverse the membrane as a helical segment. Over 527 to 546 (PNSIAFSTGHLLVKDMVRTG) the chain is Cytoplasmic. A helical membrane pass occupies residues 547-567 (LLMNLMGVLLLSLAMNTWAQA). Residues 568–600 (IFQLGTFPDWANTHAANVTALPPALTNNTVQTL) are Extracellular-facing. 2 N-linked (GlcNAc...) asparagine glycosylation sites follow: asparagine 584 and asparagine 594.

This sequence belongs to the SLC13A/DASS transporter (TC 2.A.47) family. NADC subfamily. In terms of tissue distribution, highly expressed in proximal parts of straight tubules in the kidney. Detected in placenta, in brain, and in liver. Strongly expressed within the meningeal layers of supporting tissue that surround the brain and relatively weakly expressed throughout the cerebral cortex, hippocampus, and cerebellum.

Its subcellular location is the cell membrane. It carries out the reaction succinate(out) + 3 Na(+)(out) = succinate(in) + 3 Na(+)(in). The enzyme catalyses 2-oxoglutarate(out) + 3 Na(+)(out) = 2-oxoglutarate(in) + 3 Na(+)(in). It catalyses the reaction N-acetyl-L-aspartate(out) + 3 Na(+)(out) = N-acetyl-L-aspartate(in) + 3 Na(+)(in). The catalysed reaction is glutarate(out) + 3 Na(+)(out) = glutarate(in) + 3 Na(+)(in). It carries out the reaction fumarate(out) + 3 Na(+)(out) = fumarate(in) + 3 Na(+)(in). The enzyme catalyses malate(out) + 3 Na(+)(out) = malate(in) + 3 Na(+)(in). It catalyses the reaction 2,2-dimethylsuccinate(out) + 3 Na(+)(out) = 2,2-dimethylsuccinate(in) + 3 Na(+)(in). The catalysed reaction is 2,3-dimethylsuccinate(out) + 3 Na(+)(out) = 2,3-dimethylsuccinate(in) + 3 Na(+)(in). It carries out the reaction itaconate(out) + 3 Na(+)(out) = itaconate(in) + 3 Na(+)(in). With respect to regulation, li(+) decreases succinate transport in the presence of Na(+). Its function is as follows. High-affinity sodium-dicarboxylate cotransporter that accepts a range of substrates with 4-6 carbon atoms, such as the citric acid cycle intermediates succinate and alpha-ketoglutarate (2-oxoglutarate), as well as other compounds including N-acetyl-L-aspartate. Transports the dicarboxylate into the cell with a probable stoichiometry of 3 Na(+) for 1 divalent dicarboxylate, rendering the process electrogenic. Can transport citrate in a Na(+)-dependent manner, recognizing the divalent form of citrate rather than the trivalent form which is normally found in blood. Imports itaconate in hepatocytes leading to activation of TFEB-dependent lysosomal biogenesis involved in antibacterial innate immune response. This is Na(+)/dicarboxylate cotransporter 3 (Slc13a3) from Rattus norvegicus (Rat).